Reading from the N-terminus, the 184-residue chain is Peptidyl-tRNA hydrolase (184 aa).

Residue Tyr17 coordinates tRNA. Catalysis depends on His22, which acts as the Proton acceptor. Residues Phe71, Asn73, and Asn119 each coordinate tRNA.

Belongs to the PTH family. Monomer.

Its subcellular location is the cytoplasm. It carries out the reaction an N-acyl-L-alpha-aminoacyl-tRNA + H2O = an N-acyl-L-amino acid + a tRNA + H(+). Its function is as follows. Hydrolyzes ribosome-free peptidyl-tRNAs (with 1 or more amino acids incorporated), which drop off the ribosome during protein synthesis, or as a result of ribosome stalling. Catalyzes the release of premature peptidyl moieties from peptidyl-tRNA molecules trapped in stalled 50S ribosomal subunits, and thus maintains levels of free tRNAs and 50S ribosomes. The polypeptide is Peptidyl-tRNA hydrolase (Corynebacterium diphtheriae (strain ATCC 700971 / NCTC 13129 / Biotype gravis)).